Consider the following 756-residue polypeptide: Catalase-peroxidase (756 aa).

A cross-link (tryptophyl-tyrosyl-methioninium (Trp-Tyr) (with M-270)) is located at residues Trp91–Tyr244. His92 serves as the catalytic Proton acceptor. A disordered region spans residues Ala198–Asn230. The span at Pro214–Arg223 shows a compositional bias: basic and acidic residues. The segment at residues Tyr244–Met270 is a cross-link (tryptophyl-tyrosyl-methioninium (Tyr-Met) (with W-91)). His285 is a binding site for heme b. The disordered stretch occupies residues Lys371–Ala390.

The protein belongs to the peroxidase family. Peroxidase/catalase subfamily. As to quaternary structure, homodimer or homotetramer. The cofactor is heme b. Post-translationally, formation of the three residue Trp-Tyr-Met cross-link is important for the catalase, but not the peroxidase activity of the enzyme.

It carries out the reaction H2O2 + AH2 = A + 2 H2O. The enzyme catalyses 2 H2O2 = O2 + 2 H2O. Bifunctional enzyme with both catalase and broad-spectrum peroxidase activity. This Pseudomonas syringae pv. tomato (strain ATCC BAA-871 / DC3000) protein is Catalase-peroxidase.